A 270-amino-acid chain; its full sequence is CASP-like protein 4A1 (270 aa).

Residues 1 to 110 are disordered; the sequence is MEELEKTQKF…PSFSSSSSTP (110 aa). At 1–121 the chain is on the cytoplasmic side; sequence MEELEKTQKF…ESKWASLIRK (121 aa). The span at 24 to 66 shows a compositional bias: polar residues; the sequence is SSPINFEMSSRSSLHSLPQTTIESPPDSPTLSSIPDSHGSSPH. Basic and acidic residues predominate over residues 85 to 97; sequence NGEEEKKVSESRR. Residues 100–110 are compositionally biased toward low complexity; sequence RPSFSSSSSTP. Residues 122–142 traverse the membrane as a helical segment; it reads ALLGFRVIAFVSCLVSFSVMV. Over 143-161 the chain is Extracellular; the sequence is SDRDKGWAHDSFYNYKEFR. The chain crosses the membrane as a helical span at residues 162–182; sequence FCLAANVIGFVYSGFMICDLV. Over 183 to 198 the chain is Cytoplasmic; that stretch reads YLLSTSIRRSRHNLRH. The helical transmembrane segment at 199–221 threads the bilayer; the sequence is FLEFGLDQMLAYLLASASTSASI. The Extracellular portion of the chain corresponds to 222–246; the sequence is RVDDWQSNWGADKFPDLARASVALS. A helical membrane pass occupies residues 247–267; sequence YVSFVAFAFCSLASGYALCAL. The Cytoplasmic segment spans residues 268–270; that stretch reads RSI.

Belongs to the Casparian strip membrane proteins (CASP) family. As to quaternary structure, homodimer and heterodimers.

The protein resides in the cell membrane. The polypeptide is CASP-like protein 4A1 (Arabidopsis thaliana (Mouse-ear cress)).